A 638-amino-acid chain; its full sequence is Threonine--tRNA ligase (638 aa).

A TGS domain is found at 1–61; sequence MPVITLPDGS…SVDGKLQIIT (61 aa). The tract at residues 243–534 is catalytic; sequence DHRKIGKTQD…LTEEYAGFFP (292 aa). The Zn(2+) site is built by Cys334, His385, and His511.

Belongs to the class-II aminoacyl-tRNA synthetase family. As to quaternary structure, homodimer. It depends on Zn(2+) as a cofactor.

Its subcellular location is the cytoplasm. The enzyme catalyses tRNA(Thr) + L-threonine + ATP = L-threonyl-tRNA(Thr) + AMP + diphosphate + H(+). Functionally, catalyzes the attachment of threonine to tRNA(Thr) in a two-step reaction: L-threonine is first activated by ATP to form Thr-AMP and then transferred to the acceptor end of tRNA(Thr). Also edits incorrectly charged L-seryl-tRNA(Thr). This is Threonine--tRNA ligase from Hamiltonella defensa subsp. Acyrthosiphon pisum (strain 5AT).